Here is a 299-residue protein sequence, read N- to C-terminus: Protoheme IX farnesyltransferase (299 aa).

Helical transmembrane passes span 25-45 (VVVL…RAGV), 47-67 (WTVL…AAAV), 95-115 (LAAL…LLTF), 119-139 (LAAW…TGFL), 147-167 (IVIG…AVSG), 173-193 (PLLL…ALAI), 218-238 (LHIL…YAIH), 243-263 (LYLL…WALY), and 279-299 (IRYL…PLTL).

It belongs to the UbiA prenyltransferase family. Protoheme IX farnesyltransferase subfamily.

The protein resides in the cell inner membrane. It carries out the reaction heme b + (2E,6E)-farnesyl diphosphate + H2O = Fe(II)-heme o + diphosphate. It functions in the pathway porphyrin-containing compound metabolism; heme O biosynthesis; heme O from protoheme: step 1/1. Converts heme B (protoheme IX) to heme O by substitution of the vinyl group on carbon 2 of heme B porphyrin ring with a hydroxyethyl farnesyl side group. The protein is Protoheme IX farnesyltransferase of Azotobacter vinelandii (strain DJ / ATCC BAA-1303).